We begin with the raw amino-acid sequence, 155 residues long: Phosphopantetheine adenylyltransferase (155 aa).

It belongs to the eukaryotic CoaD family.

The protein resides in the cytoplasm. The catalysed reaction is (R)-4'-phosphopantetheine + ATP + H(+) = 3'-dephospho-CoA + diphosphate. Its pathway is cofactor biosynthesis; coenzyme A biosynthesis. Its function is as follows. Reversibly transfers an adenylyl group from ATP to 4'-phosphopantetheine, yielding dephospho-CoA (dPCoA) and pyrophosphate. The polypeptide is Phosphopantetheine adenylyltransferase (Pyrobaculum aerophilum (strain ATCC 51768 / DSM 7523 / JCM 9630 / CIP 104966 / NBRC 100827 / IM2)).